The chain runs to 275 residues: Cytochrome c oxidase subunit 3 (275 aa).

The next 7 helical transmembrane spans lie at 22-42, 52-72, 96-116, 132-152, 173-193, 211-231, and 253-273; these read PWPLLTSFALLILTSAAVMYF, SGALLVGIGLATTVAAMALWF, GVALFIISEVFFFISVFWAFF, PVGIATINPFELPLLNTILLL, AILGTLMTLIFAVLFTICQGI, FFFSTGFHGVHVIIGTLFIAV, and ILYWHFVDVVWLFLFISVYWW.

This sequence belongs to the cytochrome c oxidase subunit 3 family. In terms of assembly, component of the cytochrome c oxidase (complex IV, CIV), a multisubunit enzyme composed of a catalytic core of 3 subunits and several supernumerary subunits. The complex exists as a monomer or a dimer and forms supercomplexes (SCs) in the inner mitochondrial membrane with ubiquinol-cytochrome c oxidoreductase (cytochrome b-c1 complex, complex III, CIII).

It localises to the mitochondrion inner membrane. The enzyme catalyses 4 Fe(II)-[cytochrome c] + O2 + 8 H(+)(in) = 4 Fe(III)-[cytochrome c] + 2 H2O + 4 H(+)(out). Functionally, component of the cytochrome c oxidase, the last enzyme in the mitochondrial electron transport chain which drives oxidative phosphorylation. The respiratory chain contains 3 multisubunit complexes succinate dehydrogenase (complex II, CII), ubiquinol-cytochrome c oxidoreductase (cytochrome b-c1 complex, complex III, CIII) and cytochrome c oxidase (complex IV, CIV), that cooperate to transfer electrons derived from NADH and succinate to molecular oxygen, creating an electrochemical gradient over the inner membrane that drives transmembrane transport and the ATP synthase. Cytochrome c oxidase is the component of the respiratory chain that catalyzes the reduction of oxygen to water. Electrons originating from reduced cytochrome c in the intermembrane space (IMS) are transferred via the dinuclear copper A center (CU(A)) of subunit 2 and heme A of subunit 1 to the active site in subunit 1, a binuclear center (BNC) formed by heme A3 and copper B (CU(B)). The BNC reduces molecular oxygen to 2 water molecules using 4 electrons from cytochrome c in the IMS and 4 protons from the mitochondrial matrix. This chain is Cytochrome c oxidase subunit 3 (COX3), found in Mycosarcoma maydis (Corn smut fungus).